The chain runs to 491 residues: Protein nucleotidyltransferase YdiU (491 aa).

The ATP site is built by glycine 94, glycine 96, arginine 97, lysine 117, aspartate 129, glycine 130, arginine 180, and arginine 187. Residue aspartate 256 is the Proton acceptor of the active site. Mg(2+) is bound by residues asparagine 257 and aspartate 266. Residue aspartate 266 coordinates ATP.

It belongs to the SELO family. It depends on Mg(2+) as a cofactor. Mn(2+) serves as cofactor.

The catalysed reaction is L-seryl-[protein] + ATP = 3-O-(5'-adenylyl)-L-seryl-[protein] + diphosphate. It catalyses the reaction L-threonyl-[protein] + ATP = 3-O-(5'-adenylyl)-L-threonyl-[protein] + diphosphate. The enzyme catalyses L-tyrosyl-[protein] + ATP = O-(5'-adenylyl)-L-tyrosyl-[protein] + diphosphate. It carries out the reaction L-histidyl-[protein] + UTP = N(tele)-(5'-uridylyl)-L-histidyl-[protein] + diphosphate. The catalysed reaction is L-seryl-[protein] + UTP = O-(5'-uridylyl)-L-seryl-[protein] + diphosphate. It catalyses the reaction L-tyrosyl-[protein] + UTP = O-(5'-uridylyl)-L-tyrosyl-[protein] + diphosphate. Functionally, nucleotidyltransferase involved in the post-translational modification of proteins. It can catalyze the addition of adenosine monophosphate (AMP) or uridine monophosphate (UMP) to a protein, resulting in modifications known as AMPylation and UMPylation. The protein is Protein nucleotidyltransferase YdiU of Brevibacillus brevis (strain 47 / JCM 6285 / NBRC 100599).